The sequence spans 289 residues: ATP synthase gamma chain (289 aa).

This sequence belongs to the ATPase gamma chain family. F-type ATPases have 2 components, CF(1) - the catalytic core - and CF(0) - the membrane proton channel. CF(1) has five subunits: alpha(3), beta(3), gamma(1), delta(1), epsilon(1). CF(0) has three main subunits: a, b and c.

It localises to the cell inner membrane. Produces ATP from ADP in the presence of a proton gradient across the membrane. The gamma chain is believed to be important in regulating ATPase activity and the flow of protons through the CF(0) complex. This Cereibacter sphaeroides (strain ATCC 17029 / ATH 2.4.9) (Rhodobacter sphaeroides) protein is ATP synthase gamma chain.